The sequence spans 1350 residues: ABC transporter G family member 45 (1350 aa).

The segment at 1–23 (MAAAVELTGDGGTTAETRWLSPP) is disordered. Residues 85–357 (AACAHMCTTR…FETMGFKCPS (273 aa)) form the ABC transporter 1 domain. 118-125 (GAPGSGKT) is a binding site for ATP. The region spanning 434–647 (NIFKACFSRE…AQNAVALNEF (214 aa)) is the ABC transmembrane type-2 1 domain. A run of 6 helical transmembrane segments spans residues 453–473 (VHIFKTIQITVLALVISTLFL), 491–511 (ALFMAVVIVNFNGMTEIAMTI), 523–543 (ILALPGWALLSSVFLLSLPIS), 557–577 (VIGYAPSFVRFIQHFVVLFAM), 597–617 (MANMLGTAALIAIYILGGFVI), and 683–703 (ICVSILFGFSLVFNILSIFAL). The ABC transporter 2 domain occupies 749-1001 (LVFDHINYFV…NMIKYFEAIP (253 aa)). 794–801 (GITGAGKT) is an ATP binding site. Residues 1074–1288 (AQCMACLWKQ…TVYGLMFSQL (215 aa)) enclose the ABC transmembrane type-2 2 domain. The next 7 helical transmembrane spans lie at 1099–1119 (INTFAVSIMFGIVFWKIGSTI), 1126–1146 (FNILGVVYGSALFLGFMNCSI), 1181–1201 (LPYMFVQVFIFSAIVYPMIGF), 1208–1228 (FFWFALYMVLSFLYYTLYGMM), 1238–1258 (IAAGLSFLIFIFWNVFSGFII), 1269–1289 (WVYWANPAAWTVYGLMFSQLG), and 1322–1342 (LVTSLHVAIIALFTFLFFLSI).

This sequence belongs to the ABC transporter superfamily. ABCG family. PDR (TC 3.A.1.205) subfamily.

The protein localises to the membrane. Its function is as follows. May be a general defense protein. This is ABC transporter G family member 45 from Oryza sativa subsp. japonica (Rice).